A 291-amino-acid chain; its full sequence is Ribosomal RNA small subunit methyltransferase A (291 aa).

Positions 28, 30, 55, 77, 103, and 123 each coordinate S-adenosyl-L-methionine.

Belongs to the class I-like SAM-binding methyltransferase superfamily. rRNA adenine N(6)-methyltransferase family. RsmA subfamily.

The protein resides in the cytoplasm. The enzyme catalyses adenosine(1518)/adenosine(1519) in 16S rRNA + 4 S-adenosyl-L-methionine = N(6)-dimethyladenosine(1518)/N(6)-dimethyladenosine(1519) in 16S rRNA + 4 S-adenosyl-L-homocysteine + 4 H(+). Specifically dimethylates two adjacent adenosines (A1518 and A1519) in the loop of a conserved hairpin near the 3'-end of 16S rRNA in the 30S particle. May play a critical role in biogenesis of 30S subunits. The polypeptide is Ribosomal RNA small subunit methyltransferase A (Azorhizobium caulinodans (strain ATCC 43989 / DSM 5975 / JCM 20966 / LMG 6465 / NBRC 14845 / NCIMB 13405 / ORS 571)).